A 266-amino-acid chain; its full sequence is Type III pantothenate kinase (266 aa).

Residue Asp6–Val13 coordinates ATP. Substrate-binding positions include Tyr100 and Gly107 to Arg110. The Proton acceptor role is filled by Asp109. Asp129 is a K(+) binding site. Thr132 provides a ligand contact to ATP. A substrate-binding site is contributed by Thr184.

Belongs to the type III pantothenate kinase family. As to quaternary structure, homodimer. NH4(+) serves as cofactor. K(+) is required as a cofactor.

The protein localises to the cytoplasm. The catalysed reaction is (R)-pantothenate + ATP = (R)-4'-phosphopantothenate + ADP + H(+). The protein operates within cofactor biosynthesis; coenzyme A biosynthesis; CoA from (R)-pantothenate: step 1/5. Catalyzes the phosphorylation of pantothenate (Pan), the first step in CoA biosynthesis. The chain is Type III pantothenate kinase from Clostridium beijerinckii (strain ATCC 51743 / NCIMB 8052) (Clostridium acetobutylicum).